Consider the following 144-residue polypeptide: Globin-1 (144 aa).

In terms of domain architecture, Globin spans 1–141 (VSANDIKNVQ…ILHQMSSYFA (141 aa)). His-89 contributes to the heme b binding site.

It belongs to the globin family. As to quaternary structure, homodimer.

This Phreagena soyoae (Deep-sea cold-seep clam) protein is Globin-1.